We begin with the raw amino-acid sequence, 361 residues long: MSASPAANTFGASAPPANMFDTVPGYEGTLAGGGGGYLPPPMPSVPMPVPEQAPHPPDWHIPSISEERAREAFATYVSSNCCYSSGPVTDGVITNMQSFNTYRYRLETFTESRSTEWSQEPYSGQPVDAGVQPAPGPWQIAAQPPPFFQDQKQAIKVPFTSSIKNCHVCLGMGNKPCTTCAGAGNKVCWVCNGSGSRLNDERCSHCNGQGRENCSSCSGNGSSQCDTCHGKRQLIVFINLNVKWSTEKEDFVAQDLSGLKVEKLEKVSGKELFKDSQFMVYPVMGFPDASVAQASQRIVRDHQTKFAQTSRILQQRQTIELIPVTKVNYTWKGNPYVYYVYGNEFEVNAEDYPATCCCSVM.

Its subcellular location is the cytoplasm. It localises to the nucleus. Plays a role in odontogenesis. The sequence is that of Protein SSUH2 homolog from Danio rerio (Zebrafish).